The following is a 1661-amino-acid chain: Beta/gamma crystallin domain-containing protein 2 (1661 aa).

8 disordered regions span residues 72–135 (EEET…PPCV), 148–168 (PGPR…SSRS), 242–268 (VPAG…GLGS), 297–321 (PASA…GRAP), 337–380 (STEL…THPG), 411–757 (EHVT…EEDE), 808–871 (LGPW…VSCS), and 883–903 (TKGP…PTSR). Residues 105–118 (PKEKRPEGRLKEAV) are compositionally biased toward basic and acidic residues. The span at 337-353 (STELPLQTSQGQASVPS) shows a compositional bias: polar residues. A compositionally biased stretch (low complexity) spans 431 to 442 (PSPGGLSAPSSP). Polar residues-rich tracts occupy residues 507–519 (SSPT…QGSS), 628–644 (PKST…SSIQ), and 685–697 (SEGS…TQKE). Residues 706 to 719 (PAPSSSVDRVSPSP) are compositionally biased toward low complexity. Polar residues predominate over residues 731-750 (EASTESQLVSDPTEGKTCTE). Positions 825–835 (EKEEEEEEEPE) are enriched in acidic residues. Residues 841-851 (DDEKLQRRQEK) are compositionally biased toward basic and acidic residues. Beta/gamma crystallin 'Greek key' domains are found at residues 986–1023 (GKVI…RVVR), 1024–1067 (GCWV…RRVV), 1073–1113 (PEIS…TVSA), 1114–1156 (GLWL…KPMR), 1168–1213 (PRAV…RVLG), 1214–1256 (GCWV…RVIR), 1262–1302 (PAVV…HVLS), 1303–1345 (GVWV…QPVL), 1356–1393 (SKIQ…RVHG), 1394–1437 (GSWI…QKVS), 1443–1483 (PSIF…RIKG), and 1484–1525 (GIWV…YPIK). The 91-residue stretch at 1569-1659 (WYYEDGLLKN…DRASQIWTIH (91 aa)) folds into the Ricin B-type lectin domain.

The protein belongs to the beta/gamma-crystallin family.

The chain is Beta/gamma crystallin domain-containing protein 2 from Homo sapiens (Human).